Consider the following 418-residue polypeptide: Gamma-glutamyl phosphate reductase (418 aa).

Belongs to the gamma-glutamyl phosphate reductase family.

Its subcellular location is the cytoplasm. The enzyme catalyses L-glutamate 5-semialdehyde + phosphate + NADP(+) = L-glutamyl 5-phosphate + NADPH + H(+). Its pathway is amino-acid biosynthesis; L-proline biosynthesis; L-glutamate 5-semialdehyde from L-glutamate: step 2/2. In terms of biological role, catalyzes the NADPH-dependent reduction of L-glutamate 5-phosphate into L-glutamate 5-semialdehyde and phosphate. The product spontaneously undergoes cyclization to form 1-pyrroline-5-carboxylate. This is Gamma-glutamyl phosphate reductase from Agathobacter rectalis (strain ATCC 33656 / DSM 3377 / JCM 17463 / KCTC 5835 / VPI 0990) (Eubacterium rectale).